Here is a 120-residue protein sequence, read N- to C-terminus: Cytochrome b5 (120 aa).

Positions 2 to 78 constitute a Cytochrome b5 heme-binding domain; sequence PKVYSYQEVA…LKGLYIGDVD (77 aa). H37 and H61 together coordinate heme. Residues 98-118 form a helical membrane-spanning segment; that stretch reads GSGTLVVILAILMLGVAYYLL.

This sequence belongs to the cytochrome b5 family.

Its subcellular location is the endoplasmic reticulum membrane. The protein resides in the microsome membrane. Membrane bound hemoprotein which function as an electron carrier for several membrane bound oxygenases. It plays a role in fatty-acid desaturation and is also involved in several steps of the sterol biosynthesis pathway, particularly in the 4-demethylation of the 4,4'-dimethyl zymosterol. The protein is Cytochrome b5 (CYB5) of Saccharomyces cerevisiae (strain ATCC 204508 / S288c) (Baker's yeast).